The chain runs to 279 residues: Very long chain fatty acid elongase 1 (279 aa).

At Met1 the chain carries N-acetylmethionine. Helical transmembrane passes span 23-43, 61-81, 110-130, 137-154, 176-196, 201-221, and 231-251; these read PLMG…YFVL, FMIV…YEFL, VAWL…IFIL, VTFL…SWWW, VIMY…PYLW, MTAI…QYYF, and VIIH…SNFW. The short motif at 275 to 279 is the Di-lysine motif element; sequence KVKAN.

Belongs to the ELO family. ELOVL1 subfamily. Interacts with LASS2 and HSD17B12. Interacts with TECR. Ubiquitous.

It localises to the endoplasmic reticulum membrane. The catalysed reaction is a very-long-chain acyl-CoA + malonyl-CoA + H(+) = a very-long-chain 3-oxoacyl-CoA + CO2 + CoA. It carries out the reaction eicosanoyl-CoA + malonyl-CoA + H(+) = 3-oxodocosanoyl-CoA + CO2 + CoA. The enzyme catalyses (11Z)-eicosenoyl-CoA + malonyl-CoA + H(+) = 3-oxo-(13Z)-docosenoyl-CoA + CO2 + CoA. It catalyses the reaction docosanoyl-CoA + malonyl-CoA + H(+) = 3-oxotetracosanoyl-CoA + CO2 + CoA. The catalysed reaction is (13Z)-docosenoyl-CoA + malonyl-CoA + H(+) = 3-oxo-(15Z)-tetracosenoyl-CoA + CO2 + CoA. It carries out the reaction tetracosanoyl-CoA + malonyl-CoA + H(+) = 3-oxohexacosanoyl-CoA + CO2 + CoA. The enzyme catalyses hexacosanoyl-CoA + malonyl-CoA + H(+) = 3-oxooctacosanyol-CoA + CO2 + CoA. It catalyses the reaction octadecanoyl-CoA + malonyl-CoA + H(+) = 3-oxoeicosanoyl-CoA + CO2 + CoA. It participates in lipid metabolism; fatty acid biosynthesis. In terms of biological role, catalyzes the first and rate-limiting reaction of the four reactions that constitute the long-chain fatty acids elongation cycle. This endoplasmic reticulum-bound enzymatic process allows the addition of 2 carbons to the chain of long- and very long-chain fatty acids (VLCFAs) per cycle. Condensing enzyme that exhibits activity toward saturated and monounsaturated acyl-CoA substrates, with the highest activity towards C22:0 acyl-CoA. May participate in the production of both saturated and monounsaturated VLCFAs of different chain lengths that are involved in multiple biological processes as precursors of membrane lipids and lipid mediators. Important for saturated C24:0 and monounsaturated C24:1 sphingolipid synthesis. Indirectly inhibits RPE65 via production of VLCFAs. This is Very long chain fatty acid elongase 1 from Homo sapiens (Human).